The chain runs to 142 residues: HTH-type transcriptional regulator MntR (142 aa).

Residues 1–63 (MTTPSMEDYI…YEKYRGLVLT (63 aa)) form the HTH dtxR-type domain. Asp8, Glu11, His77, Glu99, Glu102, and His103 together coordinate Cd(2+). Mn(2+) contacts are provided by Asp8, Glu11, His77, Glu99, Glu102, and His103.

The protein belongs to the DtxR/MntR family. As to quaternary structure, homodimer.

It is found in the cytoplasm. Its activity is regulated as follows. DNA binding is strongly activated by Mn(2+) and Cd(2+), but it is poorly activated by non-cognate metal cations, including Co(2+), Fe(2+), Ni(2+), Ca(2+) and Zn(2+). In the strict absence of divalent transition metal ions, MntR has a low affinity for DNA. Its function is as follows. Central regulator of manganese homeostasis that regulates the expression of both manganese uptake and efflux systems. In the presence of high levels of manganese, it mediates repression of the manganese uptake systems MntH and MntABCD and activation of the efflux systems MneP and MneS. Binds with high affinity to the regulatory regions of its target genes. The manganese concentration required for activation of efflux is higher than that for repression of uptake. The sequence is that of HTH-type transcriptional regulator MntR from Bacillus subtilis (strain 168).